The primary structure comprises 396 residues: 1-deoxy-D-xylulose 5-phosphate reductoisomerase (396 aa).

Positions 13, 14, 15, 16, and 127 each coordinate NADPH. Lysine 128 contributes to the 1-deoxy-D-xylulose 5-phosphate binding site. Glutamate 129 is a binding site for NADPH. Residue aspartate 153 participates in Mn(2+) binding. Residues serine 154, glutamate 155, serine 184, and histidine 207 each contribute to the 1-deoxy-D-xylulose 5-phosphate site. Glutamate 155 is a binding site for Mn(2+). Residue glycine 213 participates in NADPH binding. Positions 220, 225, 226, and 229 each coordinate 1-deoxy-D-xylulose 5-phosphate. Residue glutamate 229 coordinates Mn(2+).

This sequence belongs to the DXR family. It depends on Mg(2+) as a cofactor. Requires Mn(2+) as cofactor.

The enzyme catalyses 2-C-methyl-D-erythritol 4-phosphate + NADP(+) = 1-deoxy-D-xylulose 5-phosphate + NADPH + H(+). The protein operates within isoprenoid biosynthesis; isopentenyl diphosphate biosynthesis via DXP pathway; isopentenyl diphosphate from 1-deoxy-D-xylulose 5-phosphate: step 1/6. Catalyzes the NADPH-dependent rearrangement and reduction of 1-deoxy-D-xylulose-5-phosphate (DXP) to 2-C-methyl-D-erythritol 4-phosphate (MEP). The polypeptide is 1-deoxy-D-xylulose 5-phosphate reductoisomerase (Pseudomonas savastanoi pv. phaseolicola (strain 1448A / Race 6) (Pseudomonas syringae pv. phaseolicola (strain 1448A / Race 6))).